The primary structure comprises 369 residues: 3 beta-hydroxysteroid dehydrogenase type 7 (369 aa).

The active-site Proton acceptor is tyrosine 159. Lysine 163 contributes to the NAD(+) binding site. Helical transmembrane passes span 289–309 and 311–331; these read LLPYWLLVFLAALNALLQWLL and PLVLYAPLLNPYTLAVANTTF.

The protein belongs to the 3-beta-HSD family.

It is found in the endoplasmic reticulum membrane. It catalyses the reaction 7alpha-hydroxycholesterol + NAD(+) = 7alpha-hydroxycholest-4-en-3-one + NADH + H(+). It carries out the reaction 7alpha,25-dihydroxycholesterol + NAD(+) = 7alpha,25-dihydroxy-4-cholesten-3-one + NADH + H(+). The enzyme catalyses (25R)-cholest-5-en-3beta,7alpha,26-triol + NAD(+) = (25R)-7alpha,26-dihydroxycholest-4-en-3-one + NADH + H(+). The catalysed reaction is (24S)-7alpha-dihydroxycholesterol + NAD(+) = (24S)-7alpha,24-dihydroxycholest-4-en-3-one + NADH + H(+). Its pathway is lipid metabolism; steroid biosynthesis. Its function is as follows. The 3-beta-HSD enzymatic system plays a crucial role in the biosynthesis of all classes of hormonal steroids. HSD VII is active against four 7-alpha-hydroxylated sterols. Does not metabolize several different C(19/21) steroids as substrates. Involved in bile acid synthesis. Plays a key role in cell positioning and movement in lymphoid tissues by mediating degradation of 7-alpha,25-dihydroxycholesterol (7-alpha,25-OHC): 7-alpha,25-OHC acts as a ligand for the G protein-coupled receptor GPR183/EBI2, a chemotactic receptor for a number of lymphoid cells. In Homo sapiens (Human), this protein is 3 beta-hydroxysteroid dehydrogenase type 7.